We begin with the raw amino-acid sequence, 388 residues long: Glutamine transporter 2 (388 aa).

The next 11 helical transmembrane spans lie at 5 to 27, 31 to 53, 86 to 106, 121 to 141, 147 to 167, 186 to 206, 218 to 238, 268 to 288, 302 to 322, 326 to 346, and 368 to 388; these read LFGS…IPMV, FGLF…AALL, LFYL…ADLI, FAQV…TQII, LLFF…IPGM, TSTI…LVAY, MVIL…YAVV, IILS…VAMA, IVTY…AADQ, VLGY…LAMV, and GGKL…ISQI.

It belongs to the amino acid/polyamine transporter 2 family.

It localises to the cell inner membrane. Its function is as follows. Seems to be involved in glutamine transport. Complements an E.coli glnP deletion mutant. The chain is Glutamine transporter 2 from Aliivibrio fischeri (strain ATCC 700601 / ES114) (Vibrio fischeri).